Consider the following 74-residue polypeptide: uncharacterized protein (74 aa).

2 disordered regions span residues 1 to 26 and 46 to 74; these read MNGP…SGVF and ITNS…SFTQ. The chain crosses the membrane as a helical span at residues 34–50; that stretch reads VSNKSIMLISLKITNSP. Residues 47 to 74 are compositionally biased toward low complexity; it reads TNSPNSNSRGSSSSSSTSKSSSKTSFTQ.

The protein resides in the membrane. This is an uncharacterized protein from Dictyostelium discoideum (Social amoeba).